A 229-amino-acid chain; its full sequence is 2,3-bisphosphoglycerate-dependent phosphoglycerate mutase (229 aa).

Residues Arg-7–Asn-14, Thr-20–Gly-21, Arg-59, Glu-86–Tyr-89, Lys-97, Arg-113–Arg-114, and Gly-182–Asn-183 each bind substrate. The active-site Tele-phosphohistidine intermediate is the His-8. Glu-86 (proton donor/acceptor) is an active-site residue.

The protein belongs to the phosphoglycerate mutase family. BPG-dependent PGAM subfamily.

It catalyses the reaction (2R)-2-phosphoglycerate = (2R)-3-phosphoglycerate. The protein operates within carbohydrate degradation; glycolysis; pyruvate from D-glyceraldehyde 3-phosphate: step 3/5. Catalyzes the interconversion of 2-phosphoglycerate and 3-phosphoglycerate. The chain is 2,3-bisphosphoglycerate-dependent phosphoglycerate mutase from Listeria monocytogenes serovar 1/2a (strain ATCC BAA-679 / EGD-e).